A 63-amino-acid polypeptide reads, in one-letter code: Conotoxin p5a (63 aa).

Residues 1–19 (MRCLPVFVILLLLIPSAPC) form the signal peptide. Residues 20-50 (VDAHPKTKDDMPLASFHDNAKGTLQRFWKKR) constitute a propeptide that is removed on maturation. Cystine bridges form between C52–C59 and C53–C60. L62 carries the post-translational modification Leucine amide.

As to expression, expressed by the venom duct.

The protein resides in the secreted. In vivo, low levels of the peptide injected into male specimens of the Siamese fighting fish causes an immediate aggressive display in this fish in response to their reflection when placed in a mirrored aquarium; High levels of the peptide suppressed this behavior. No effect is observed when injected into mice. In Conus purpurascens (Purple cone), this protein is Conotoxin p5a.